The primary structure comprises 500 residues: UDP-N-acetylmuramoyl-L-alanyl-D-glutamate--2,6-diaminopimelate ligase (500 aa).

A UDP-N-acetyl-alpha-D-muramoyl-L-alanyl-D-glutamate-binding site is contributed by Ser-38. 118-124 is an ATP binding site; it reads GTNGKTS. Residues 160 to 161, Ser-187, and Arg-195 contribute to the UDP-N-acetyl-alpha-D-muramoyl-L-alanyl-D-glutamate site; that span reads TT. Lys-227 carries the post-translational modification N6-carboxylysine. Residues Arg-395, 419–422, Gly-471, and Glu-475 contribute to the meso-2,6-diaminopimelate site; that span reads DNPR. A Meso-diaminopimelate recognition motif motif is present at residues 419–422; sequence DNPR.

This sequence belongs to the MurCDEF family. MurE subfamily. The cofactor is Mg(2+). Carboxylation is probably crucial for Mg(2+) binding and, consequently, for the gamma-phosphate positioning of ATP.

The protein localises to the cytoplasm. The catalysed reaction is UDP-N-acetyl-alpha-D-muramoyl-L-alanyl-D-glutamate + meso-2,6-diaminopimelate + ATP = UDP-N-acetyl-alpha-D-muramoyl-L-alanyl-gamma-D-glutamyl-meso-2,6-diaminopimelate + ADP + phosphate + H(+). Its pathway is cell wall biogenesis; peptidoglycan biosynthesis. Catalyzes the addition of meso-diaminopimelic acid to the nucleotide precursor UDP-N-acetylmuramoyl-L-alanyl-D-glutamate (UMAG) in the biosynthesis of bacterial cell-wall peptidoglycan. The polypeptide is UDP-N-acetylmuramoyl-L-alanyl-D-glutamate--2,6-diaminopimelate ligase (Leptospira borgpetersenii serovar Hardjo-bovis (strain L550)).